We begin with the raw amino-acid sequence, 454 residues long: tRNA modification GTPase MnmE (454 aa).

(6S)-5-formyl-5,6,7,8-tetrahydrofolate contacts are provided by arginine 23, glutamate 80, and lysine 120. One can recognise a TrmE-type G domain in the interval 216-377 (GMKVVIAGRP…LRNHLKQSMG (162 aa)). Asparagine 226 is a K(+) binding site. Residues 226-231 (NAGKSS), 245-251 (TDIAGTT), 270-273 (DTAG), 335-338 (NKAD), and 358-360 (SAR) contribute to the GTP site. Residue serine 230 participates in Mg(2+) binding. K(+) is bound by residues threonine 245, isoleucine 247, and threonine 250. Residue threonine 251 coordinates Mg(2+). A (6S)-5-formyl-5,6,7,8-tetrahydrofolate-binding site is contributed by lysine 454.

It belongs to the TRAFAC class TrmE-Era-EngA-EngB-Septin-like GTPase superfamily. TrmE GTPase family. Homodimer. Heterotetramer of two MnmE and two MnmG subunits. K(+) serves as cofactor.

The protein localises to the cytoplasm. Functionally, exhibits a very high intrinsic GTPase hydrolysis rate. Involved in the addition of a carboxymethylaminomethyl (cmnm) group at the wobble position (U34) of certain tRNAs, forming tRNA-cmnm(5)s(2)U34. The chain is tRNA modification GTPase MnmE from Escherichia coli O7:K1 (strain IAI39 / ExPEC).